We begin with the raw amino-acid sequence, 145 residues long: Basic leucine zipper 1 (145 aa).

Over residues 1-11 the composition is skewed to polar residues; the sequence is MANAEKTSSGS. The disordered stretch occupies residues 1–39; the sequence is MANAEKTSSGSDIDEKKRKRKLSNRESARRSRLKKQKLM. The bZIP domain maps to 14 to 77; sequence DEKKRKRKLS…DSVETENAGL (64 aa). Residues 16–37 are basic motif; sequence KKRKRKLSNRESARRSRLKKQK. Positions 46 to 53 are leucine-zipper; it reads ISSLERRI.

The protein belongs to the bZIP family. As to quaternary structure, interacts with ZFP7, BZIP4, BZIP9, BZIP10, BZIP11, BZIP25, BZIP42, BZIP44, BZIP53, BZIP58 and BZIP63. In terms of tissue distribution, expressed in both shoots, including young leaves, stipulae and trichomes (except in cotyledons and hypocotyl), and roots, including vascular tissues (e.g. in both the phloem and the xylem). Present in seeds and pollen. Restricted to vasculatures and roots in the presence of sucrose or glucose.

It is found in the nucleus. Transcription factor that binds to the C-box-like motif (5'-TGCTGACGTCA-3') and G-box-like motif (5'-CCACGTGGCC-3'), ABRE elements, of gene promoters involved in sugar signaling. Activated by low energy stress both at transcriptional and post-transcriptional mechanisms. Promotes dark-induced senescence and participates in the transcriptional reprogramming of amino acid metabolism during the dark-induced starvation response. Transcription activator of the mannan synthase CSLA9. Recognizes and binds to DNA-specific sequence of CSLA9 promoter. This chain is Basic leucine zipper 1 (BZIP1), found in Arabidopsis thaliana (Mouse-ear cress).